The primary structure comprises 447 residues: Phosphoglucosamine mutase (447 aa).

Ser102 (phosphoserine intermediate) is an active-site residue. Positions 102, 241, 243, and 245 each coordinate Mg(2+). Ser102 is modified (phosphoserine).

It belongs to the phosphohexose mutase family. Requires Mg(2+) as cofactor. Activated by phosphorylation.

The catalysed reaction is alpha-D-glucosamine 1-phosphate = D-glucosamine 6-phosphate. Functionally, catalyzes the conversion of glucosamine-6-phosphate to glucosamine-1-phosphate. In Pseudomonas savastanoi pv. phaseolicola (strain 1448A / Race 6) (Pseudomonas syringae pv. phaseolicola (strain 1448A / Race 6)), this protein is Phosphoglucosamine mutase.